Consider the following 374-residue polypeptide: 5-pentadecatrienyl resorcinol O-methyltransferase (374 aa).

S-adenosyl-L-methionine-binding residues include D239, D261, M262, and K275. H279 functions as the Proton acceptor in the catalytic mechanism.

This sequence belongs to the class I-like SAM-binding methyltransferase superfamily. Cation-independent O-methyltransferase family. COMT subfamily. As to quaternary structure, homodimer. As to expression, expressed predominantly in root hairs.

It carries out the reaction (8Z,11Z)-5-(pentadeca-8,11,14-trien-1-yl)resorcinol + S-adenosyl-L-methionine = (8Z,11Z)-5-(pentadeca- 8,11,14-trien-1-yl)resorcinol-3-methyl ether + S-adenosyl-L-homocysteine + H(+). In terms of biological role, O-methyltransferase involved in the biosynthetic pathway of the phytotoxin sorgoleone, a potent broad-spectrum inhibitor active against many agronomically important monocot and dicot weed species. Substrate specificity for alkylresorcinols. Strong preference for a five carbons alkyl side chain. In Sorghum bicolor (Sorghum), this protein is 5-pentadecatrienyl resorcinol O-methyltransferase (OMT3).